We begin with the raw amino-acid sequence, 459 residues long: N-chimaerin (459 aa).

Position 2 is an N-acetylalanine (A2). The 87-residue stretch at 49 to 135 folds into the SH2 domain; it reads EYHGMISREE…IETKAAEYIA (87 aa). T192 carries the phosphothreonine modification. Residues 205-255 form a Phorbol-ester/DAG-type zinc finger; it reads VHNFKVHTFRGPHWCEYCANFMWGLIAQGVKCADCGLNVHKQCSKMVPNDC. Residues 268–459 form the Rho-GAP domain; the sequence is CDLTTLVKAH…LLIKNEDILF (192 aa). T340 carries the post-translational modification Phosphothreonine.

Interacts with EPHA4; effector of EPHA4 in axon guidance linking EPHA4 activation to RAC1 regulation. May also interact with EPHB1 and EPHB2. In terms of processing, phosphorylated. Phosphorylation is EPHA4 kinase activity-dependent.

Its function is as follows. GTPase-activating protein for p21-rac and a phorbol ester receptor. May play an important role in neuronal signal-transduction mechanisms. Involved in the assembly of neuronal locomotor circuits as a direct effector of EPHA4 in axon guidance. In Mus musculus (Mouse), this protein is N-chimaerin (Chn1).